A 154-amino-acid chain; its full sequence is Urease accessory protein UreE (154 aa).

Belongs to the UreE family.

It localises to the cytoplasm. Functionally, involved in urease metallocenter assembly. Binds nickel. Probably functions as a nickel donor during metallocenter assembly. The polypeptide is Urease accessory protein UreE (Escherichia coli O157:H7).